Here is a 499-residue protein sequence, read N- to C-terminus: Putative protein phosphatase 2C 76 (499 aa).

Residues 1-34 (MRLGCSGRRRRLLRAALLRLVVLVLVAPPRRCAG) form the signal peptide. The disordered stretch occupies residues 67–101 (AGSGGEGDGDRRSSSSSPPPPPHPRGCHVAVDRGR). Residues 92 to 457 (GCHVAVDRGR…DNVAAVIVPL (366 aa)) form the PPM-type phosphatase domain. Mn(2+) is bound by residues aspartate 138 and glycine 139. The disordered stretch occupies residues 286–306 (KKTSVVSGKRRRKRNSNNRDD). Aspartate 397 and aspartate 448 together coordinate Mn(2+).

The protein belongs to the PP2C family. The cofactor is Mg(2+). Mn(2+) serves as cofactor.

The enzyme catalyses O-phospho-L-seryl-[protein] + H2O = L-seryl-[protein] + phosphate. The catalysed reaction is O-phospho-L-threonyl-[protein] + H2O = L-threonyl-[protein] + phosphate. This is Putative protein phosphatase 2C 76 from Oryza sativa subsp. japonica (Rice).